A 274-amino-acid chain; its full sequence is Large ribosomal subunit protein uL2cz/uL2cy (274 aa).

2 disordered regions span residues 1 to 21 (MAIH…VDSQ) and 225 to 254 (PVDH…PALG).

The protein belongs to the universal ribosomal protein uL2 family. As to quaternary structure, part of the 50S ribosomal subunit.

It localises to the plastid. The protein localises to the chloroplast. This is Large ribosomal subunit protein uL2cz/uL2cy (rpl2-A) from Draba nemorosa (Woodland whitlowgrass).